A 264-amino-acid chain; its full sequence is Tritrans,polycis-undecaprenyl-diphosphate synthase (geranylgeranyl-diphosphate specific) (264 aa).

D43 is a catalytic residue. D43 provides a ligand contact to Mg(2+). Substrate contacts are provided by residues 44–47 (GNRR), W48, H60, and 88–90 (STE). Residue N91 is the Proton acceptor of the active site. Substrate is bound by residues F92, R94, R213, and 219–221 (RIS). E232 lines the Mg(2+) pocket.

Belongs to the UPP synthase family. As to quaternary structure, homodimer. Mg(2+) is required as a cofactor.

It carries out the reaction geranylgeranyl diphosphate + 7 isopentenyl diphosphate = tri-trans,hepta-cis-undecaprenyl diphosphate + 7 diphosphate. Functionally, catalyzes the sequential condensation of isopentenyl diphosphate (IPP) with geranylgeranyl diphosphate (GGPP) to yield (2Z,6Z,10Z,14Z,18Z,22Z,26Z,30E,34E,38E)-undecaprenyl diphosphate (tritrans,heptacis-UPP). It is probably the precursor of glycosyl carrier lipids. The chain is Tritrans,polycis-undecaprenyl-diphosphate synthase (geranylgeranyl-diphosphate specific) from Pyrococcus horikoshii (strain ATCC 700860 / DSM 12428 / JCM 9974 / NBRC 100139 / OT-3).